Reading from the N-terminus, the 143-residue chain is Flagellar assembly factor FliW (143 aa).

Belongs to the FliW family. Interacts with translational regulator CsrA and flagellin(s).

The protein resides in the cytoplasm. Acts as an anti-CsrA protein, binds CsrA and prevents it from repressing translation of its target genes, one of which is flagellin. Binds to flagellin and participates in the assembly of the flagellum. The sequence is that of Flagellar assembly factor FliW from Clostridium botulinum (strain Okra / Type B1).